A 583-amino-acid chain; its full sequence is Lamin-B3 (583 aa).

Residues 1–30 (MATSTPSRAREHASAAQSPGSPTRISRMQE) are disordered. A head region spans residues 2-32 (ATSTPSRAREHASAAQSPGSPTRISRMQEKE). A compositionally biased stretch (polar residues) spans 15-26 (AAQSPGSPTRIS). A Phosphoserine modification is found at Ser-21. The IF rod domain maps to 30-386 (EKEDLRHLND…KMLEGEEQRL (357 aa)). Positions 33 to 67 (DLRHLNDRLAAYIERVRSLEADKSLLKIQLEEREE) are coil 1A. Residues 68–79 (VSSREVTNLRQL) are linker 1. Positions 80 to 215 (YETELADARK…QKNIHTQEVK (136 aa)) are coil 1B. The tract at residues 216 to 242 (EIKKRHDTRIVEIDSGRRVEFESKLAE) is linker 2. The tract at residues 243–384 (ALQELRRDHE…YRKMLEGEEQ (142 aa)) is coil 2. Residues 383 to 431 (EQRLKLSPSPSQRSTVSRASTSQTSRLLRGKKRKLDETGRSVTKRSYKV) are disordered. The segment at 385–580 (RLKLSPSPSQ…QSHQSVDPSC (196 aa)) is tail. Polar residues predominate over residues 390–408 (PSPSQRSTVSRASTSQTSR). At Ser-391 the chain carries Phosphoserine. The region spanning 429–546 (YKVVQQASST…EECAERTLYR (118 aa)) is the LTD domain. Cys-580 is modified (cysteine methyl ester). Residue Cys-580 is the site of S-farnesyl cysteine attachment. The propeptide at 581-583 (SIM) is removed in mature form.

This sequence belongs to the intermediate filament family. Post-translationally, phosphorylation plays a key role in lamin organization, subcellular localization and nuclear envelope disintegration. Phosphorylation by CDK1 at Ser-21 at the onset of mitosis drives lamin disassembly and nuclear envelope breakdown.

It localises to the nucleus lamina. The protein localises to the nucleus envelope. The protein resides in the nucleus. Its subcellular location is the nucleoplasm. It is found in the nucleus matrix. Functionally, lamins are intermediate filament proteins that assemble into a filamentous meshwork, and which constitute the major components of the nuclear lamina, a fibrous layer on the nucleoplasmic side of the inner nuclear membrane. Lamins provide a framework for the nuclear envelope, bridging the nuclear envelope and chromatin, thereby playing an important role in nuclear assembly, chromatin organization, nuclear membrane and telomere dynamics. The structural integrity of the lamina is strictly controlled by the cell cycle, as seen by the disintegration and formation of the nuclear envelope in prophase and telophase, respectively. The polypeptide is Lamin-B3 (lmnb3.L) (Xenopus laevis (African clawed frog)).